We begin with the raw amino-acid sequence, 443 residues long: Transcriptional regulatory protein ZraR (443 aa).

The Response regulatory domain occupies 7–121 (DILVVDDDIS…KLQLTLSEAL (115 aa)). D56 bears the 4-aspartylphosphate mark. Residues 141–370 (MVGDSPAMRA…LENAVERAVV (230 aa)) enclose the Sigma-54 factor interaction domain. ATP-binding residues include G172, T173, R329, and R359. The H-T-H motif DNA-binding region spans 423-442 (KTEAARRLGITRKTLLAKLS).

Post-translationally, phosphorylated by ZraS.

Its subcellular location is the cytoplasm. With respect to regulation, activity of the ZraS/ZraR two-component system is repressed by the zinc-bound form of ZraP, which probably interacts with the periplasmic region of ZraS. In terms of biological role, part of the Zra signaling pathway, an envelope stress response (ESR) system composed of the periplasmic accessory protein ZraP, the histidine kinase ZraS and the transcriptional regulator ZraR. The ZraPSR system contributes to antibiotic resistance and is important for membrane integrity in the presence of membrane-targeting biocides. ZraR is a member of the two-component regulatory system ZraS/ZraR. When activated by ZraS, acts in conjunction with sigma-54 to regulate the expression of zraP in the presence of high Zn(2+) or Pb(2+) concentrations. Also positively autoregulates the expression of the zraSR operon. The polypeptide is Transcriptional regulatory protein ZraR (zraR) (Klebsiella oxytoca).